The sequence spans 367 residues: Alanine racemase (367 aa).

Lys-40 (proton acceptor; specific for D-alanine) is an active-site residue. N6-(pyridoxal phosphate)lysine is present on Lys-40. Substrate is bound at residue Arg-136. Tyr-263 functions as the Proton acceptor; specific for L-alanine in the catalytic mechanism. Met-310 lines the substrate pocket.

Belongs to the alanine racemase family. It depends on pyridoxal 5'-phosphate as a cofactor.

The catalysed reaction is L-alanine = D-alanine. The protein operates within amino-acid biosynthesis; D-alanine biosynthesis; D-alanine from L-alanine: step 1/1. Its function is as follows. Catalyzes the interconversion of L-alanine and D-alanine. May also act on other amino acids. The chain is Alanine racemase (alr) from Streptococcus thermophilus (strain CNRZ 1066).